The primary structure comprises 506 residues: 2-isopropylmalate synthase (506 aa).

The Pyruvate carboxyltransferase domain occupies 4–266; sequence ILFMDTTLRD…EPSITLKEIK (263 aa). Positions 13, 201, 203, and 237 each coordinate Mn(2+). Residues 390 to 506 form a regulatory domain region; it reads NITQLQVHFV…KLKSFIQLVK (117 aa).

It belongs to the alpha-IPM synthase/homocitrate synthase family. LeuA type 1 subfamily. In terms of assembly, homodimer. Mn(2+) serves as cofactor.

Its subcellular location is the cytoplasm. The catalysed reaction is 3-methyl-2-oxobutanoate + acetyl-CoA + H2O = (2S)-2-isopropylmalate + CoA + H(+). It participates in amino-acid biosynthesis; L-leucine biosynthesis; L-leucine from 3-methyl-2-oxobutanoate: step 1/4. Its function is as follows. Catalyzes the condensation of the acetyl group of acetyl-CoA with 3-methyl-2-oxobutanoate (2-ketoisovalerate) to form 3-carboxy-3-hydroxy-4-methylpentanoate (2-isopropylmalate). This Bacillus thuringiensis subsp. konkukian (strain 97-27) protein is 2-isopropylmalate synthase.